Here is a 3010-residue protein sequence, read N- to C-terminus: Probable polyketide synthase 2 (3010 aa).

The 424-residue stretch at 9–432 folds into the Ketosynthase family 3 (KS3) domain; it reads SRDVAVIGIG…GSNACLLLSE (424 aa). Catalysis depends on for beta-ketoacyl synthase activity residues cysteine 174, histidine 313, and histidine 353. An acyl/malonyl transferase region spans residues 629 to 662; that stretch reads GINPSINVGHSFGEISSACCSGMLDLETACFIVY. Serine 639 (for acyl/malonyl transferase activity) is an active-site residue. The segment at 944–1063 is N-terminal hotdog fold; that stretch reads ATQLGYRNDV…ARFSVLKHNS (120 aa). The 292-residue stretch at 944 to 1235 folds into the PKS/mFAS DH domain; that stretch reads ATQLGYRNDV…YSSISTDIKN (292 aa). The active-site Proton acceptor; for dehydratase activity is the histidine 976. Residues 1080 to 1235 form a C-terminal hotdog fold region; that stretch reads NWTTIKRKEF…YSSISTDIKN (156 aa). The active-site Proton donor; for dehydratase activity is the aspartate 1146. The Carrier domain maps to 2482–2559; it reads DNELSIRDDI…QLIQAVIQAV (78 aa). Serine 2519 is subject to O-(pantetheine 4'-phosphoryl)serine.

Requires pantetheine 4'-phosphate as cofactor.

In terms of biological role, probable polyketide synthase. This is Probable polyketide synthase 2 (pks2) from Dictyostelium discoideum (Social amoeba).